A 172-amino-acid polypeptide reads, in one-letter code: Signal peptidase complex catalytic subunit SEC11 (172 aa).

Residues Met-1–Gln-14 are Cytoplasmic-facing. Residues Leu-15 to Ile-35 form a helical; Signal-anchor for type II membrane protein membrane-spanning segment. The Lumenal segment spans residues Thr-36–Glu-172. Active-site charge relay system residues include Ser-49, His-90, and Asp-115. Residues Val-158–Leu-169 are C-terminal short (CTS) helix.

The protein belongs to the peptidase S26B family. As to quaternary structure, component of the signal peptidase complex (SPC) composed of a catalytic subunit SEC11 and three accessory subunits SPC1, SPC2 and SPC3. The complex induces a local thinning of the ER membrane which is used to measure the length of the signal peptide (SP) h-region of protein substrates. This ensures the selectivity of the complex towards h-regions shorter than 18-20 amino acids. SPC associates with the translocon complex.

The protein localises to the endoplasmic reticulum membrane. The catalysed reaction is Cleavage of hydrophobic, N-terminal signal or leader sequences from secreted and periplasmic proteins.. Catalytic component of the signal peptidase complex (SPC) which catalyzes the cleavage of N-terminal signal sequences from nascent proteins as they are translocated into the lumen of the endoplasmic reticulum. Specifically cleaves N-terminal signal peptides that contain a hydrophobic alpha-helix (h-region) shorter than 18-20 amino acids. In Chaetomium globosum (strain ATCC 6205 / CBS 148.51 / DSM 1962 / NBRC 6347 / NRRL 1970) (Soil fungus), this protein is Signal peptidase complex catalytic subunit SEC11 (SEC11).